Consider the following 209-residue polypeptide: Small ribosomal subunit protein uS4 (209 aa).

An S4 RNA-binding domain is found at 98–161; sequence ARLDNVVYRM…RDLEVIKKAV (64 aa).

It belongs to the universal ribosomal protein uS4 family. Part of the 30S ribosomal subunit. Contacts protein S5. The interaction surface between S4 and S5 is involved in control of translational fidelity.

One of the primary rRNA binding proteins, it binds directly to 16S rRNA where it nucleates assembly of the body of the 30S subunit. Functionally, with S5 and S12 plays an important role in translational accuracy. The sequence is that of Small ribosomal subunit protein uS4 from Thermotoga petrophila (strain ATCC BAA-488 / DSM 13995 / JCM 10881 / RKU-1).